A 420-amino-acid chain; its full sequence is Amino acid decarboxylase lolD1 (420 aa).

Position 62 is an N6-(pyridoxal phosphate)lysine (Lys-62). Residues Ser-194, Gly-231, and 266 to 269 (EPGT) each bind pyridoxal 5'-phosphate. 315-316 (IV) contributes to the substrate binding site. The active-site Proton donor; shared with dimeric partner is Cys-351. Cys-351 carries the S-nitrosocysteine modification. A substrate-binding site is contributed by Asp-352. Tyr-381 serves as a coordination point for pyridoxal 5'-phosphate.

Belongs to the Orn/Lys/Arg decarboxylase class-II family. Homodimer. Requires pyridoxal 5'-phosphate as cofactor.

The protein operates within alkaloid biosynthesis. Functionally, amino acid decarboxylase; part of the gene cluster that mediates the biosynthesis of loline alkaloids, potent insecticidal agents composed of a pyrrolizidine ring system and an uncommon ether bridge linking carbons 2 and 7. Lolines are structurally differentiated by the various modifications of the L-amino group and include norloline, loline, N-methylloline, N-acetylloline, N-acetylnorloline, and N-formylloline. The first committed step is the condensation of O-acetyl-L-homoserine (derived from L-aspartic acid) and L-proline, probably catalyzed by the gamma-type pyridoxal 5'-phosphate(PLP)-dependent enzyme lolC, to give the diamino diacid, NACPP. Ensuing cyclization, decarboxylation, and acetylation steps yield 1-exo-acetamidopyrrolizidine (AcAP). LolO is required for installation of the ether bridge upon the pathway intermediate, 1-exo-acetamidopyrrolizidine (AcAP). In sequential 2-oxoglutarate- and O(2)-consuming steps, lolO removes hydrogens from C2 and C7 of AcAP to form both carbon-oxygen bonds in N-acetylnorloline (NANL), the precursor to all other lolines. The enzymes lolD, lolE, lolF and lolT have also been proposed to be involved in the ether-bridge installation. Further processing of the exocyclic moiety of NANL by fungal N-acetamidase (LolN), methyltransferase (LolM), and cytochrome P450 (LolP) enzymes, with occasional involvement of a plant acetyltransferase, generates the other known lolines. LolN transforms NANL to norlonine which is monomethylated and dimethylated to respectively lonine and N-methyllonine (NML) by lolM. LolP catalyzes hydroxylation of the methyl group in N-methylloline (NML) and further oxygenation to N-formylloline (NFL). A plant acetyltransferase is responsible for the acetylation of loline to form N-acetylloline (NAL). LolA might interact with aspartate kinase to prevent feedback inhibition of its activity by these end products and thereby promote production of L-homoserine from L-aspartate. This is Amino acid decarboxylase lolD1 from Epichloe uncinata (Endophyte fungus).